Consider the following 457-residue polypeptide: Transcription factor PCF7 (457 aa).

Residues S58–Q84 are a coiled coil. Positions R95–V121 are disordered. Gly residues predominate over residues G101–S115. The 59-residue stretch at R140 to L198 folds into the TCP domain. 2 disordered regions span residues P199 to N231 and K263 to Q299. Positions S212–G230 are enriched in polar residues. Residues S268 to A278 show a composition bias toward low complexity.

Forms homodimers and heterodimers.

The protein localises to the nucleus. In terms of biological role, transcription activator. Binds the promoter core sequence 5'-GGNCC-3'. This chain is Transcription factor PCF7 (PCF7), found in Oryza sativa subsp. indica (Rice).